A 129-amino-acid polypeptide reads, in one-letter code: Antileukoproteinase (129 aa).

Positions 1 to 22 are cleaved as a signal peptide; the sequence is GRGLLPFVLLALGIXAPWAVEG. WAP domains lie at 25–73 and 79–127; these read NALK…LNPV and VKVK…LTPV. Cystine bridges form between Cys32–Cys61, Cys40–Cys65, Cys48–Cys60, Cys54–Cys69, Cys86–Cys115, Cys93–Cys119, Cys102–Cys114, and Cys108–Cys123. Residues 81-129 form an elastase inhibitory domain region; it reads VKPGKCPVVYGQCMMLNPPNHCKTDSQCLGDLKCCKSMCGKVCLTPVKA.

Interacts with GRN; interaction protects progranulin from proteolysis. As to expression, found in pregnant endometrium and myometrium, placenta, allantoic fluids, fetal cord blood, and fetal liver. Also found in uterus and lung.

It localises to the secreted. Its function is as follows. Acid-stable proteinase inhibitor with strong affinities for trypsin, chymotrypsin, elastase, and cathepsin G. Modulates the inflammatory and immune responses after bacterial infection, and after infection by the intracellular parasite L.major. Down-regulates responses to bacterial lipopolysaccharide (LPS). Plays a role in regulating the activation of NF-kappa-B and inflammatory responses. Has antimicrobial activity against mycobacteria, but not against salmonella. Contributes to normal resistance against infection by M.tuberculosis. Required for normal resistance to infection by L.major. Required for normal wound healing, probably by preventing tissue damage by limiting protease activity. Together with ELANE, required for normal differentiation and proliferation of bone marrow myeloid cells. This Sus scrofa (Pig) protein is Antileukoproteinase (SLPI).